The following is a 167-amino-acid chain: U-scoloptoxin(08)-Er5a (167 aa).

Residues 1 to 22 (MKTNCEFPLLCLLIVLVANVEG) form the signal peptide. A propeptide spanning residues 23–94 (EVEDTGLKMV…KRLWRNWERR (72 aa)) is cleaved from the precursor. RLWRNWE repeat units lie at residues 34–40 (RLWRNWE), 61–67 (RLWRNWE), and 86–92 (RLWRNWE). Glutamine 95 carries the post-translational modification Pyrrolidone carboxylic acid. One copy of the RLWRNWE 4; approximate repeat lies at 107-113 (ELWRNWE). Residues 112 to 118 (WEDLKRR) constitute a propeptide that is removed on maturation. Glutamine 119 is subject to Pyrrolidone carboxylic acid. Residues 134–140 (RLWRNWE) form an RLWRNWE 5 repeat. Positions 139-167 (WEDNHATLRKRSADSLSRQKRLGKERGKE) are excised as a propeptide. Residues 147 to 167 (RKRSADSLSRQKRLGKERGKE) form a disordered region.

It belongs to the scoloptoxin-08 family. As to expression, expressed by the venom gland.

It is found in the secreted. The sequence is that of U-scoloptoxin(08)-Er5a from Ethmostigmus rubripes (Giant centipede).